We begin with the raw amino-acid sequence, 319 residues long: MAAKGGTVKPASGFSATEDAQTLRKAMKGLGTDEDAIISVLAPRNTSQRQEIRTAYKSTIGRDLMDDLKSELSGNFERVIVGMITPTVLYDVQELRRAMKGSGTDEGCLIEILASRTPEELRCINQTYQLQYGRSLEDVIRSDTSFMFQRVLVSLSAGGRDEGNFLDDALMRQDAQDLYEAGEKKWGTDEVKFLTVLCSRNRNHLLHVFDEYKRISQKDIEQGIKSETSGSFEDALLAIVKCMRNKSAYFAERLYKSMKGLGTDDNTLIRVMVSRAEIDMMDIRESFKRLYGKSLYSFIKGDTSGDYRKVLLILCGGDD.

Residue A2 is modified to N-acetylalanine. T7 carries the post-translational modification Phosphothreonine. At S12 the chain carries Phosphoserine. Annexin repeat units lie at residues 14-85 (FSAT…GMIT), 86-157 (PTVL…SLSA), 169-241 (ALMR…AIVK), and 245-316 (NKSA…ILCG). An N6-acetyllysine mark is found at K213, K293, and K300.

The protein belongs to the annexin family. As to expression, expressed in pancreas (at protein level). Also detected in liver, spleen, intestine, stomach, kidney, and adrenal glands.

It is found in the zymogen granule membrane. Its function is as follows. Calcium/phospholipid-binding protein which promotes membrane fusion and is involved in exocytosis. The sequence is that of Annexin A4 (ANXA4) from Canis lupus familiaris (Dog).